A 407-amino-acid chain; its full sequence is Methyltransferase/ribosomally synthesized type I borosin cyclic peptide precursor ceuMA2 (407 aa).

Positions Met1 to Arg246 are methyltransferase domain. Catalysis depends on residues Arg70, Tyr74, and Tyr96. S-adenosyl-L-methionine-binding residues include Tyr96, His98, Val101, Ala128, Gln170, Gly208, Ser239, and Thr240. Residues Glu247–Thr370 are clasp domain. Positions Pro371–Ser393 are precursor leader. N-methylthreonine is present on residues Thr399 and Thr400. Ile401 is modified (N-methylisoleucine). Residues Val402 and Val403 each carry the N-methylvaline modification. At Ile404 the chain carries N-methylisoleucine. Position 405 is an N-methylvaline (Val405). Residue His406 is modified to N-methylhistidine.

In the N-terminal section; belongs to the precorrin methyltransferase family. As to quaternary structure, homodimer. In terms of processing, ceuMA2 automethylates at Thr-399, Thr-400, Ile-401, Val-402, Val-403, Ile-404, Val-405 and His-406 before being processed by a prolyloligopeptidase which likely forms a peptidyl ester upon removal of the follower propeptide, which then undergoes macrocyclization with the N-terminus of the modified core peptide. Peptide backbone alpha-N-methylations change the physicochemical properties of amide bonds to provide structural constraints and other favorable characteristics including biological membrane permeability to peptides.

It participates in secondary metabolite biosynthesis. Its function is as follows. Fusion protein of the methyltransferase ceuM2 and a type I borosin core peptide; part of the gene cluster that mediates the biosynthesis of a type I borosin, a highly methylated cyclic peptide with potent biological activities. Type I borosins derive from the C-terminus of the fusion protein, and it is the same protein that methylates its own C-terminus using S-adenosyl methionine (SAM). The C-terminus is subsequently cleaved off and macrocyclized by a prolyloligopeptidase to give the final product. This Cerrena unicolor (Canker rot fungus) protein is Methyltransferase/ribosomally synthesized type I borosin cyclic peptide precursor ceuMA2.